The primary structure comprises 472 residues: Nuclear receptor subfamily 0 group B member 1 (472 aa).

3 tandem repeats follow at residues 1 to 67, 68 to 135, and 136 to 202. The 4 X 67 AA tandem repeats stretch occupies residues 1 to 255; it reads MAGEDHPWQG…RLITLKDPQV (255 aa). Short sequence motifs (LXXLL motif) lie at residues 13 to 17, 80 to 84, and 148 to 152; these read LYNLL, LYSML, and LYSLL. The NR LBD domain occupies 190–471; the sequence is QSTQAMAFLY…DMMLEMLCAK (282 aa). Residues 203–255 form a 4; truncated repeat; it reads VCGEEQPQQISVASGTPVSADQTPATPQEQPRAPWWDASPGVQRLITLKDPQV. Positions 214-231 are enriched in polar residues; sequence VASGTPVSADQTPATPQE. 2 disordered regions span residues 214 to 238 and 324 to 343; these read VASG…APWW and TTRR…ATEQ. The short motif at 463-468 is the AF-2 motif element; it reads MMLEML.

Belongs to the nuclear hormone receptor family. NR0 subfamily. Homodimer. Interacts with NR5A1, NR5A2, NR0B2 and with COPS2. Interacts with ESRRB; represses ESRRB activity at the GATA6 promoter. In terms of tissue distribution, expressed in adult cerebral cortex, spinal cord, thymus, heart, lung, ovary, testis, adrenal gland, hypothalamus, spleen and kidney.

The protein resides in the nucleus. It localises to the cytoplasm. Its function is as follows. Nuclear receptor that lacks a DNA-binding domain and acts as a corepressor that inhibits the transcriptional activity of other nuclear receptors through heterodimeric interactions. Component of a cascade required for the development of the hypothalamic-pituitary-adrenal-gonadal axis. May also have a role in the development of the embryo and in the maintenance of embryonic stem cell pluripotency. The chain is Nuclear receptor subfamily 0 group B member 1 (Nr0b1) from Mus musculus (Mouse).